The primary structure comprises 144 residues: Large ribosomal subunit protein uL15 (144 aa).

The tract at residues 1-49 is disordered; sequence MRLNTLSPAAGAKSAAKRVGRGIGSGTGKTCGRGHKGQKSRSGGGVRVG. The span at 21-31 shows a compositional bias: gly residues; the sequence is RGIGSGTGKTC.

This sequence belongs to the universal ribosomal protein uL15 family. Part of the 50S ribosomal subunit.

In terms of biological role, binds to the 23S rRNA. The protein is Large ribosomal subunit protein uL15 of Shewanella halifaxensis (strain HAW-EB4).